A 139-amino-acid polypeptide reads, in one-letter code: Small ribosomal subunit protein bS6 (139 aa).

The tract at residues 119-139 (LKGASKVETPTGPESTDIQEK) is disordered. The segment covering 130–139 (GPESTDIQEK) has biased composition (polar residues).

The protein belongs to the bacterial ribosomal protein bS6 family.

Functionally, binds together with bS18 to 16S ribosomal RNA. This is Small ribosomal subunit protein bS6 from Borreliella burgdorferi (strain ZS7) (Borrelia burgdorferi).